The chain runs to 258 residues: L-aminoadipate-semialdehyde dehydrogenase-phosphopantetheinyl transferase (258 aa).

This sequence belongs to the P-Pant transferase superfamily. AcpS family.

It is found in the cytoplasm. It localises to the nucleus. The catalysed reaction is apo-[ACP] + CoA = holo-[ACP] + adenosine 3',5'-bisphosphate + H(+). In terms of biological role, catalyzes the transfer of a 4'-phosphopantetheine moiety from coenzyme A to a serine residue of acceptor proteins, such as alpha-aminoadipate reductase. Necessary for alpha-aminoadipate reductase activity. This chain is L-aminoadipate-semialdehyde dehydrogenase-phosphopantetheinyl transferase (lys7), found in Schizosaccharomyces pombe (strain 972 / ATCC 24843) (Fission yeast).